Reading from the N-terminus, the 503-residue chain is ATP synthase subunit alpha, chloroplastic (503 aa).

Position 170–177 (170–177 (GDRQTGKT)) interacts with ATP.

The protein belongs to the ATPase alpha/beta chains family. As to quaternary structure, F-type ATPases have 2 components, CF(1) - the catalytic core - and CF(0) - the membrane proton channel. CF(1) has five subunits: alpha(3), beta(3), gamma(1), delta(1), epsilon(1). CF(0) has four main subunits: a, b, b' and c.

It localises to the plastid. The protein localises to the chloroplast thylakoid membrane. The enzyme catalyses ATP + H2O + 4 H(+)(in) = ADP + phosphate + 5 H(+)(out). Functionally, produces ATP from ADP in the presence of a proton gradient across the membrane. The alpha chain is a regulatory subunit. The protein is ATP synthase subunit alpha, chloroplastic of Trieres chinensis (Marine centric diatom).